The primary structure comprises 333 residues: UPF0284 protein TGAM_0534 (333 aa).

Belongs to the UPF0284 family.

This Thermococcus gammatolerans (strain DSM 15229 / JCM 11827 / EJ3) protein is UPF0284 protein TGAM_0534.